Consider the following 741-residue polypeptide: NAD(P)H-quinone oxidoreductase subunit 5, chloroplastic (741 aa).

Transmembrane regions (helical) follow at residues Trp9 to Val29, Trp40 to Ile60, Ile89 to Ile109, Leu122 to Val139, Ile147 to Thr167, Gly185 to Phe205, Asn219 to Ala239, Thr258 to Ala278, Leu280 to Ile300, Thr396 to Ser416, Trp425 to Tyr445, Leu544 to Phe564, Ile603 to Val623, and Tyr719 to Leu739.

It belongs to the complex I subunit 5 family. As to quaternary structure, NDH is composed of at least 16 different subunits, 5 of which are encoded in the nucleus.

It is found in the plastid. It localises to the chloroplast thylakoid membrane. It catalyses the reaction a plastoquinone + NADH + (n+1) H(+)(in) = a plastoquinol + NAD(+) + n H(+)(out). It carries out the reaction a plastoquinone + NADPH + (n+1) H(+)(in) = a plastoquinol + NADP(+) + n H(+)(out). In terms of biological role, NDH shuttles electrons from NAD(P)H:plastoquinone, via FMN and iron-sulfur (Fe-S) centers, to quinones in the photosynthetic chain and possibly in a chloroplast respiratory chain. The immediate electron acceptor for the enzyme in this species is believed to be plastoquinone. Couples the redox reaction to proton translocation, and thus conserves the redox energy in a proton gradient. In Liriodendron tulipifera (Tuliptree), this protein is NAD(P)H-quinone oxidoreductase subunit 5, chloroplastic (ndhF).